The following is a 463-amino-acid chain: Female germline-specific tumor suppressor gld-1 (463 aa).

Over residues 1–10 (MPSCTTPTYG) the composition is skewed to polar residues. The disordered stretch occupies residues 1-76 (MPSCTTPTYG…RAPPPARLTL (76 aa)). Low complexity predominate over residues 11–31 (VSTQLESQSSESPSRSSVMTP). The segment at 135–205 (PTATEPIEVE…PEPAGDMISI (71 aa)) is qua1 domain; involved in homodimerization. The KH domain occupies 208-260 (KIYVPKNEYPDYNFVGRILGPRGMTAKQLEQDTGCKIMVRGKGSMRDKSKESA). The tract at residues 305-336 (APEGTDELKRKQLMELAIINGTYRPMKSPNPA) is qua2 domain; involved in RNA binding. The interval 443-463 (NTNVSPSGASPSASSVNNTSF) is disordered. Residues 447 to 457 (SPSGASPSASS) are compositionally biased toward low complexity.

Homodimer. Phosphorylated by cdk-2 which may negatively regulate its expression in distal mitotic germline cells. Post-translationally, undergoes proteasomal degradation in proximal oocytes following mating. In terms of tissue distribution, expressed in proximal and distal oocytes in female worms but is eliminated from proximal oocytes following mating.

RNA-binding protein which recognizes the 5'-UACUCAU-3' RNA consensus sequence. Binds sequences in both the 5'coding and the 3'-UTR region of rme-2 mRNA. Binds sequences in the 3'-UTR region of cye-1 mRNA. Binds to cyb-2.1, cyb-2.2 and cyb-3 mRNA. Binds sequences in the 3'-UTR region of tra-2 mRNA. Binds to the 3' UTR of Notch receptor homolog glp-1, thereby repressing glp-1 translation in the embryo. Binding to the glp-1 3' UTR is inhibited by pos-1 binding to an overlapping binding site in the glp-1 3' UTR. Germ line-specific tumor suppressor essential for oogenesis. Controls the spatial pattern of translation of multiple oogenesis specific mRNAs (e.g. yolk receptor rme-2) by repression of translation during early meiotic prophase (leptotene to pachytene) and then derepression of translation during diplotene/ diakinesis, following its degradation. Also functions to promote the male sexual fate in the hermaphrodite germline but not the male germline. Represses translation of the vacuolar ATPase component vha-13 in the distal gonad. Functions redundantly with gld-2 to promote the initiation of meiotic development and/or inhibit stem cell proliferation. By regulating cye-1 expression, prevents entry into mitosis in meiotic germline cells. In Caenorhabditis elegans, this protein is Female germline-specific tumor suppressor gld-1 (gld-1).